The chain runs to 565 residues: Adenine deaminase (565 aa).

The protein belongs to the metallo-dependent hydrolases superfamily. Adenine deaminase family. The cofactor is Mn(2+).

The catalysed reaction is adenine + H2O + H(+) = hypoxanthine + NH4(+). In Cereibacter sphaeroides (strain KD131 / KCTC 12085) (Rhodobacter sphaeroides), this protein is Adenine deaminase.